The following is a 662-amino-acid chain: Junctophilin-1 (662 aa).

Topologically, residues 1–640 (MTGGRFDFDD…EREANSGPNS (640 aa)) are cytoplasmic. 5 MORN repeats span residues 14-36 (YCGG…KGQG), 38-59 (YSGS…SGNT), 60-82 (YQGY…KWMY), 106-128 (YEGT…DGGT), and 129-151 (YQGQ…PYGM). Ser-157, Ser-216, and Ser-220 each carry phosphoserine. Residues 228 to 247 (SKSSISSKRSSVRSDAAMSR) are disordered. MORN repeat units lie at residues 281-303 (YMGE…NGMK) and 304-326 (YEGE…DGSK). Positions 432–443 (VDAKENPEEKVP) are enriched in basic and acidic residues. Positions 432–634 (VDAKENPEEK…DSCPSMEREA (203 aa)) are disordered. Thr-448 is subject to Phosphothreonine. Residue Ser-452 is modified to Phosphoserine. Position 461 is a phosphothreonine (Thr-461). Residues Ser-465, Ser-469, and Ser-475 each carry the phosphoserine modification. A compositionally biased stretch (low complexity) spans 584–599 (KPSPNKWSPPKSVTKP). A compositionally biased stretch (basic and acidic residues) spans 600–614 (VAKESKAEPKAKKSE). Residues 641 to 661 (VMIVLVMLLNIGLAILFVHFL) traverse the membrane as a helical; Anchor for type IV membrane protein segment.

The protein belongs to the junctophilin family.

It localises to the cell membrane. It is found in the endoplasmic reticulum membrane. The protein localises to the sarcoplasmic reticulum membrane. Junctophilins contribute to the formation of junctional membrane complexes (JMCs) which link the plasma membrane with the endoplasmic or sarcoplasmic reticulum in excitable cells. Provides a structural foundation for functional cross-talk between the cell surface and intracellular calcium release channels. JPH1 contributes to the construction of the skeletal muscle triad by linking the t-tubule (transverse-tubule) and SR (sarcoplasmic reticulum) membranes. The sequence is that of Junctophilin-1 (JPH1) from Oryctolagus cuniculus (Rabbit).